Here is a 210-residue protein sequence, read N- to C-terminus: Keratin-associated protein 4-9 (210 aa).

Repeat copies occupy residues 24–28, 29–33, 34–38, 39–43, 44–48, 49–53, 54–58, 59–63, 69–73, 74–78, 84–88, 89–93, 94–98, 99–103, 104–108, 109–113, 114–118, 119–123, 124–128, 129–133, 134–138, 139–143, 144–148, 149–153, 159–163, 164–168, 169–173, and 174–178. The segment at 24–178 is 29 X 5 AA repeats of C-C-[RQVHIEK]-[SPTR]-[VSTQCRNP]; sequence CCRPSCCETT…CCRPCCCVRP (155 aa).

It belongs to the KRTAP type 4 family. In terms of assembly, interacts with hair keratins. In terms of tissue distribution, expressed in the hair follicles.

Its function is as follows. In the hair cortex, hair keratin intermediate filaments are embedded in an interfilamentous matrix, consisting of hair keratin-associated proteins (KRTAP), which are essential for the formation of a rigid and resistant hair shaft through their extensive disulfide bond cross-linking with abundant cysteine residues of hair keratins. The matrix proteins include the high-sulfur and high-glycine-tyrosine keratins. In Homo sapiens (Human), this protein is Keratin-associated protein 4-9 (KRTAP4-9).